Here is a 331-residue protein sequence, read N- to C-terminus: Ketol-acid reductoisomerase (NADP(+)) (331 aa).

Positions Met-1–Thr-181 constitute a KARI N-terminal Rossmann domain. Residues Tyr-24 to Gln-27, Arg-47, and Asp-82 to Gln-85 contribute to the NADP(+) site. The active site involves His-107. Gly-133 serves as a coordination point for NADP(+). Residues Thr-182–Leu-327 form the KARI C-terminal knotted domain. The Mg(2+) site is built by Asp-190, Glu-194, Glu-226, and Glu-230. Residue Ser-251 coordinates substrate.

It belongs to the ketol-acid reductoisomerase family. The cofactor is Mg(2+).

It catalyses the reaction (2R)-2,3-dihydroxy-3-methylbutanoate + NADP(+) = (2S)-2-acetolactate + NADPH + H(+). The enzyme catalyses (2R,3R)-2,3-dihydroxy-3-methylpentanoate + NADP(+) = (S)-2-ethyl-2-hydroxy-3-oxobutanoate + NADPH + H(+). The protein operates within amino-acid biosynthesis; L-isoleucine biosynthesis; L-isoleucine from 2-oxobutanoate: step 2/4. It participates in amino-acid biosynthesis; L-valine biosynthesis; L-valine from pyruvate: step 2/4. Involved in the biosynthesis of branched-chain amino acids (BCAA). Catalyzes an alkyl-migration followed by a ketol-acid reduction of (S)-2-acetolactate (S2AL) to yield (R)-2,3-dihydroxy-isovalerate. In the isomerase reaction, S2AL is rearranged via a Mg-dependent methyl migration to produce 3-hydroxy-3-methyl-2-ketobutyrate (HMKB). In the reductase reaction, this 2-ketoacid undergoes a metal-dependent reduction by NADPH to yield (R)-2,3-dihydroxy-isovalerate. The protein is Ketol-acid reductoisomerase (NADP(+)) of Nitratidesulfovibrio vulgaris (strain ATCC 29579 / DSM 644 / CCUG 34227 / NCIMB 8303 / VKM B-1760 / Hildenborough) (Desulfovibrio vulgaris).